The primary structure comprises 228 residues: Cytidylate kinase (228 aa).

17 to 25 provides a ligand contact to ATP; it reads GPTASGKGT.

This sequence belongs to the cytidylate kinase family. Type 1 subfamily.

The protein resides in the cytoplasm. It catalyses the reaction CMP + ATP = CDP + ADP. The enzyme catalyses dCMP + ATP = dCDP + ADP. This chain is Cytidylate kinase, found in Paraburkholderia phymatum (strain DSM 17167 / CIP 108236 / LMG 21445 / STM815) (Burkholderia phymatum).